The following is a 92-amino-acid chain: Protein S100-B (92 aa).

At serine 2 the chain carries N-acetylserine. EF-hand domains are found at residues 13–48 (DVFH…LEEI) and 49–84 (KEQE…VTTA). Histidine 16 lines the Zn(2+) pocket. Ca(2+) is bound by residues serine 19, glutamate 22, and aspartate 24. Histidine 26 is a binding site for Zn(2+). 5 residues coordinate Ca(2+): aspartate 62, aspartate 64, aspartate 66, glutamate 68, and glutamate 73. Residues histidine 86 and histidine 91 each coordinate Zn(2+).

The protein belongs to the S-100 family. In terms of assembly, dimer of either two alpha chains, or two beta chains, or one alpha and one beta chain. The S100B dimer binds two molecules of STK38. Interacts with CACYBP in a calcium-dependent manner. Interacts with ATAD3A; this interaction probably occurs in the cytosol prior to ATAD3A mitochondrial targeting. Interacts with S100A6. The S100B dimer interacts with two molecules of CAPZA1. Interacts with AGER. Interacts with PPP5C (via TPR repeats); the interaction is calcium-dependent and modulates PPP5C activity. Interacts with TPPP; this interaction inhibits TPPP dimerization. Interacts with isoform CLSTN3beta of CLSTN3; interaction promotes secretion.

It localises to the cytoplasm. The protein localises to the nucleus. Its subcellular location is the secreted. Its function is as follows. Small zinc- and- and calcium-binding protein that is highly expressed in astrocytes and constitutes one of the most abundant soluble proteins in brain. Weakly binds calcium but binds zinc very tightly-distinct binding sites with different affinities exist for both ions on each monomer. Physiological concentrations of potassium ion antagonize the binding of both divalent cations, especially affecting high-affinity calcium-binding sites. Acts as a neurotrophic factor that promotes astrocytosis and axonal proliferation. Involved in innervation of thermogenic adipose tissue by acting as an adipocyte-derived neurotrophic factor that promotes sympathetic innervation of adipose tissue. Binds to and initiates the activation of STK38 by releasing autoinhibitory intramolecular interactions within the kinase. Interaction with AGER after myocardial infarction may play a role in myocyte apoptosis by activating ERK1/2 and p53/TP53 signaling. Could assist ATAD3A cytoplasmic processing, preventing aggregation and favoring mitochondrial localization. May mediate calcium-dependent regulation on many physiological processes by interacting with other proteins, such as TPR-containing proteins, and modulating their activity. This is Protein S100-B from Mus musculus (Mouse).